The primary structure comprises 354 residues: CX3C chemokine receptor 1 (354 aa).

Residues 1 to 32 (MSTSFPELDLENFEYDDSAEACYLGDIVAFGT) are Extracellular-facing. Residues 33–60 (IFLSVFYALVFTFGLVGNLLVVLALTNS) form a helical membrane-spanning segment. The Cytoplasmic segment spans residues 61–70 (RKPKSITDIY). The helical transmembrane segment at 71–91 (LLNLALSDLLFVATLPFWTHY) threads the bilayer. Over 92–104 (LISHEGLHNAMCK) the chain is Extracellular. Residues cysteine 103 and cysteine 176 are joined by a disulfide bond. Residues 105 to 126 (LTTAFFFIGFFGGIFFITVISI) traverse the membrane as a helical segment. Topologically, residues 127–143 (DRYLAIVLAANSMNNRT) are cytoplasmic. A helical transmembrane segment spans residues 144–168 (VQHGVTISLGVWAAAILVASPQFMF). The Extracellular segment spans residues 169–196 (TKRKDNECLGDYPEVLQEMWPVLRNSEV). A helical membrane pass occupies residues 197-216 (NILGFALPLLIMSFCYFRII). Residues 217-232 (QTLFSCKNRKKARAVR) are Cytoplasmic-facing. The helical transmembrane segment at 233–257 (LILLVVFAFFLFWTPYNIMIFLETL) threads the bilayer. The Extracellular portion of the chain corresponds to 258 to 274 (KFYNFFPSCDMKRDLRL). The chain crosses the membrane as a helical span at residues 275–298 (ALSVTETVAFSHCCLNPFIYAFAG). Over 299–354 (EKFRRYLGHLYRKCLAVLCGHPVHTGFSPESQRSRQDSILSSFTHYTSEGDGSLLL) the chain is Cytoplasmic. Position 345 is a phosphothreonine (threonine 345).

It belongs to the G-protein coupled receptor 1 family. Found in a ternary complex with CX3CL1 and ITGAV:ITGB3 or ITGA4:ITGB1. This protein is not N-glycosylated which is unusual for G-protein-coupled receptors. In terms of tissue distribution, specifically expressed in subsets of leukocytes: expressed in monocytes, subsets of T-cells and natural killer (NK) cells in the circulation, dendritic cells, as well as in microglia in the central nervous system (CNS). Expression level subdivides blood monocytes into two major functional subsets; CD14(+)CD16(-)-CX3CR1(low) inflammatory monocytes and CD14(low)CD16(+)CX3CR1(high) homeostatic monocytes. Expressed in myeloid-derived mucosal dendritic cells, which populate the entire lamina propria of the small intestine.

The protein resides in the cell membrane. Functionally, receptor for the C-X3-C chemokine fractalkine (CX3CL1) present on many early leukocyte cells; CX3CR1-CX3CL1 signaling exerts distinct functions in different tissue compartments, such as immune response, inflammation, cell adhesion and chemotaxis. CX3CR1-CX3CL1 signaling mediates cell migratory functions. Responsible for the recruitment of natural killer (NK) cells to inflamed tissues. Acts as a regulator of inflammation process leading to atherogenesis by mediating macrophage and monocyte recruitment to inflamed atherosclerotic plaques, promoting cell survival. Involved in airway inflammation by promoting interleukin 2-producing T helper (Th2) cell survival in inflamed lung. Involved in the migration of circulating monocytes to non-inflamed tissues, where they differentiate into macrophages and dendritic cells. Acts as a negative regulator of angiogenesis, probably by promoting macrophage chemotaxis. Plays a key role in brain microglia by regulating inflammatory response in the central nervous system (CNS) and regulating synapse maturation. Required to restrain the microglial inflammatory response in the CNS and the resulting parenchymal damage in response to pathological stimuli. Involved in brain development by participating in synaptic pruning, a natural process during which brain microglia eliminates extra synapses during postnatal development. Synaptic pruning by microglia is required to promote the maturation of circuit connectivity during brain development. Acts as an important regulator of the gut microbiota by controlling immunity to intestinal bacteria and fungi. Expressed in lamina propria dendritic cells in the small intestine, which form transepithelial dendrites capable of taking up bacteria in order to provide defense against pathogenic bacteria. Required to initiate innate and adaptive immune responses against dissemination of commensal fungi (mycobiota) component of the gut: expressed in mononuclear phagocytes (MNPs) and acts by promoting induction of antifungal IgG antibodies response to confer protection against disseminated C.albicans or C.auris infection. Also acts as a receptor for C-C motif chemokine CCL26, inducing cell chemotaxis. The sequence is that of CX3C chemokine receptor 1 from Mus musculus (Mouse).